The sequence spans 155 residues: Biotin carboxyl carrier protein of acetyl-CoA carboxylase (155 aa).

A Biotinyl-binding domain is found at 72 to 155 (AASDELSGHL…EFDEPLIVIE (84 aa)). An N6-biotinyllysine modification is found at K121.

In terms of assembly, homodimer.

It participates in lipid metabolism; fatty acid biosynthesis. In terms of biological role, this protein is a component of the acetyl coenzyme A carboxylase complex; first, biotin carboxylase catalyzes the carboxylation of the carrier protein and then the transcarboxylase transfers the carboxyl group to form malonyl-CoA. This Haemophilus influenzae (strain ATCC 51907 / DSM 11121 / KW20 / Rd) protein is Biotin carboxyl carrier protein of acetyl-CoA carboxylase (accB).